Here is a 271-residue protein sequence, read N- to C-terminus: uncharacterized protein (271 aa).

Belongs to the HAD-like hydrolase superfamily.

This is an uncharacterized protein from Staphylococcus aureus (strain NCTC 8325 / PS 47).